A 295-amino-acid chain; its full sequence is MKFGKSLSSQIVETLPEWRDKFLSYKDLKKRLKLIGGGGGGEERQAKRARVAADGGEEEAAAAAMTPEEAGFMRLLEAELDKFNSFFVEKEEEYIIRQKELQDRVARAAGRESKEELMRVRKEIVDFHGEMVLLENYSALNYTGLVKILKKYDKRTGALIRLPFIQKVLQQPFFTTDLLYKLVKQCEAMLDQLLPSNELSVSSEDGRGDSTNEDKPSNPSSSLVNGGTIPELDEIEYMESMYMKGTVAALRSLKEIRSGSSTVSAFSLPPLQGDSSPEEQQELWNKIPVIEQAAK.

Residues 1-166 enclose the SPX domain; that stretch reads MKFGKSLSSQ…GALIRLPFIQ (166 aa). The disordered stretch occupies residues 199–227; the sequence is LSVSSEDGRGDSTNEDKPSNPSSSLVNGG. Basic and acidic residues predominate over residues 204 to 216; that stretch reads EDGRGDSTNEDKP.

As to quaternary structure, interacts (via SPX domain) with PHR2 (via C-terminus). Interacts with RLI1 in the nucleus to prevents its positive regulation of leaf inclination during phosphate (Pi) starvation. As to expression, predominantly expressed in roots and leaves. Localized in leaves lamina joints.

The protein localises to the nucleus. Functionally, involved in plant adaptation to phosphate (Pi) starvation. Inhibits PHR2 DNA-binding activity via a Pi-dependent protein interaction. Suppresses the regulation on expression of PT2 by PHR2 and accumulation of shoot Pi. Optimizes growth under phosphate-limited conditions through a negative feedback loop of the PSI (phosphate starvation-induced) signaling pathway. Regulates the expression of SPX2, SPX3 and SPX5. May be an important link between signal transduction pathways related to phosphate starvation and cold stress. Together with SPX2, plays a negative role in the regulation of leaf inclination by preventing RLI1 transcription factor activity in Pi depleted conditions. This is SPX domain-containing protein 1 from Oryza sativa subsp. japonica (Rice).